We begin with the raw amino-acid sequence, 112 residues long: MEHALPDDCLSGLWRKHDDHVRLSVRLTPNGGRDAIDGVEQDADGNAHLKARVSAVPEGGKANKALIVLLAKKLGLPKSSITFISGETARKKILRIDTDPEDFEKLFKKLAG.

It belongs to the UPF0235 family.

This chain is UPF0235 protein Atu2660, found in Agrobacterium fabrum (strain C58 / ATCC 33970) (Agrobacterium tumefaciens (strain C58)).